The primary structure comprises 766 residues: 5-methyltetrahydropteroyltriglutamate--homocysteine methyltransferase (766 aa).

Residues 16–19 and Lys122 contribute to the 5-methyltetrahydropteroyltri-L-glutamate site; that span reads RELK. Residues 443–445 and Glu496 each bind L-homocysteine; that span reads IGS. L-methionine contacts are provided by residues 443 to 445 and Glu496; that span reads IGS. Residues 527-528 and Trp573 each bind 5-methyltetrahydropteroyltri-L-glutamate; that span reads RC. L-homocysteine is bound at residue Asp611. Asp611 lines the L-methionine pocket. Glu617 contacts 5-methyltetrahydropteroyltri-L-glutamate. Zn(2+)-binding residues include His653, Cys655, and Glu677. His706 serves as the catalytic Proton donor. Cys738 serves as a coordination point for Zn(2+).

Belongs to the vitamin-B12 independent methionine synthase family. The cofactor is Zn(2+).

It carries out the reaction 5-methyltetrahydropteroyltri-L-glutamate + L-homocysteine = tetrahydropteroyltri-L-glutamate + L-methionine. It functions in the pathway amino-acid biosynthesis; L-methionine biosynthesis via de novo pathway; L-methionine from L-homocysteine (MetE route): step 1/1. Functionally, catalyzes the transfer of a methyl group from 5-methyltetrahydrofolate to homocysteine resulting in methionine formation. The polypeptide is 5-methyltetrahydropteroyltriglutamate--homocysteine methyltransferase (Pseudomonas putida (strain W619)).